A 294-amino-acid chain; its full sequence is 7,8-dihydropterin-6-methyl-4-(beta-D-ribofuranosyl)-aminobenzene-5'-phosphate synthase (294 aa).

Glu116, Asp186, Lys228, and His265 together coordinate substrate.

The protein belongs to the metallo-beta-lactamase superfamily. Requires Mg(2+) as cofactor.

It carries out the reaction 4-(beta-D-ribofuranosyl)aminobenzene 5'-phosphate + (7,8-dihydropterin-6-yl)methyl diphosphate = N-[(7,8-dihydropterin-6-yl)methyl]-4-(beta-D-ribofuranosyl)aniline 5'-phosphate + diphosphate. It functions in the pathway cofactor biosynthesis; 5,6,7,8-tetrahydromethanopterin biosynthesis. In terms of biological role, catalyzes the condensation of 6-hydroxymethyl-7,8-dihydropterin pyrophosphate (DHPP) with 4-(beta-D-ribofuranosyl)-aminobenzene-5'-phosphate (beta-RFA-P) to form 7,8-dihydropterin-6-methyl-4-(beta-D-ribofuranosyl)-aminobenzene-5'-phosphate, a precursor in the biosynthesis of 5,6,7,8-tetrahydromethanopterin (H4MPT). To a lesser extent, is able to condense beta-RFA-P with another arylamine, 1-(4-aminophenyl)-1-deoxy-D-ribitol (APDR), to form 7,8-dihydropterin-6-methyl-1-(4-aminophenyl)-1-deoxy-D-ribitol. Dephosphorylated beta-RFA-P is not a substrate. The sequence is that of 7,8-dihydropterin-6-methyl-4-(beta-D-ribofuranosyl)-aminobenzene-5'-phosphate synthase from Methanocaldococcus jannaschii (strain ATCC 43067 / DSM 2661 / JAL-1 / JCM 10045 / NBRC 100440) (Methanococcus jannaschii).